We begin with the raw amino-acid sequence, 436 residues long: GTPase Der (436 aa).

EngA-type G domains follow at residues 4 to 167 (PTIA…PNTS) and 175 to 351 (IKFS…MNQN). GTP-binding positions include 10–17 (GRPNVGKS), 57–61 (DTGGI), 119–122 (NKVD), 181–188 (GRPNVGKS), 229–233 (DTAGM), and 294–297 (NKWD). One can recognise a KH-like domain in the interval 352-436 (LRIPSALLND…PIKIIPRRRK (85 aa)).

The protein belongs to the TRAFAC class TrmE-Era-EngA-EngB-Septin-like GTPase superfamily. EngA (Der) GTPase family. In terms of assembly, associates with the 50S ribosomal subunit.

Functionally, GTPase that plays an essential role in the late steps of ribosome biogenesis. The protein is GTPase Der of Enterococcus faecalis (strain ATCC 700802 / V583).